The primary structure comprises 369 residues: Flagellar P-ring protein (369 aa).

Positions 1–22 are cleaved as a signal peptide; it reads MIKLKQLIAATLLLSAAFGAHA.

It belongs to the FlgI family. In terms of assembly, the basal body constitutes a major portion of the flagellar organelle and consists of four rings (L,P,S, and M) mounted on a central rod.

The protein localises to the periplasm. It is found in the bacterial flagellum basal body. Its function is as follows. Assembles around the rod to form the L-ring and probably protects the motor/basal body from shearing forces during rotation. This chain is Flagellar P-ring protein, found in Pseudomonas syringae pv. tomato (strain ATCC BAA-871 / DC3000).